A 444-amino-acid chain; its full sequence is Methylenetetrahydrofolate--tRNA-(uracil-5-)-methyltransferase TrmFO (444 aa).

Residue 10–15 participates in FAD binding; the sequence is GAGLAG.

It belongs to the MnmG family. TrmFO subfamily. Requires FAD as cofactor.

The protein resides in the cytoplasm. It catalyses the reaction uridine(54) in tRNA + (6R)-5,10-methylene-5,6,7,8-tetrahydrofolate + NADH + H(+) = 5-methyluridine(54) in tRNA + (6S)-5,6,7,8-tetrahydrofolate + NAD(+). The catalysed reaction is uridine(54) in tRNA + (6R)-5,10-methylene-5,6,7,8-tetrahydrofolate + NADPH + H(+) = 5-methyluridine(54) in tRNA + (6S)-5,6,7,8-tetrahydrofolate + NADP(+). In terms of biological role, catalyzes the folate-dependent formation of 5-methyl-uridine at position 54 (M-5-U54) in all tRNAs. This is Methylenetetrahydrofolate--tRNA-(uracil-5-)-methyltransferase TrmFO from Streptococcus agalactiae serotype III (strain NEM316).